Consider the following 143-residue polypeptide: General odorant-binding protein 28a (143 aa).

Positions 1-21 (MQSTPIILVAIVLLGAALVRA) are cleaved as a signal peptide. 3 disulfide bridges follow: Cys38-Cys69, Cys65-Cys123, and Cys113-Cys132.

In terms of tissue distribution, expressed in antenna, mostly on the medial and posterior surface of the third antennal segment.

The protein localises to the secreted. This Drosophila melanogaster (Fruit fly) protein is General odorant-binding protein 28a (Obp28a).